The chain runs to 463 residues: MHEKLTTRFAPSPTGYLHIGGLRTALYNYLYARKNGGNFLLRIEDTDLKRNSKEATKAIIEAFKWCGLEHDGEVTYQSERFDLYKEYVKKLLDEGKAYYCYMSKEELEELRAKQEAAKERPRYDGRYREFTGTPPQGIEPVVRIKAPQSGEIVFEDGVKGEVRFKAEDIMDDFIIARSDGTPTYNFTVVIDDALMGVSDVIRGDDHLSNTPKQIVLYEALGFKIPKFFHVAMIHGEDGKKLSKRHGATDVMEYKEMGILPQALLNFLVRLGWSHGDDEVFSLEDLKKLFDPYHINKSASCYNAKKLEWLNAHYIKTLPFEEINRQLKDLGFDLSVYEKAGFLLDLLRERAKTLHDIINGAKSIVNAPQNYDENAVQKFVNKNNLELLQAFANTLKDQKTGKDFEDFTNDFLEKKEAKLKDLAQPIRIALTGSAVSPSIFEVLEFLGVDECKKRIDNFLKVRGK.

Positions 11-21 (PSPTGYLHIGG) match the 'HIGH' region motif. Residues 240 to 244 (KLSKR) carry the 'KMSKS' region motif. Residue Lys243 coordinates ATP.

This sequence belongs to the class-I aminoacyl-tRNA synthetase family. Glutamate--tRNA ligase type 1 subfamily. In terms of assembly, monomer.

The protein localises to the cytoplasm. The enzyme catalyses tRNA(Glu) + L-glutamate + ATP = L-glutamyl-tRNA(Glu) + AMP + diphosphate. Functionally, catalyzes the attachment of glutamate to tRNA(Glu) in a two-step reaction: glutamate is first activated by ATP to form Glu-AMP and then transferred to the acceptor end of tRNA(Glu). This Campylobacter jejuni subsp. jejuni serotype O:2 (strain ATCC 700819 / NCTC 11168) protein is Glutamate--tRNA ligase 2.